The sequence spans 115 residues: Holo-[acyl-carrier-protein] synthase (115 aa).

Mg(2+) contacts are provided by D6 and E51.

This sequence belongs to the P-Pant transferase superfamily. AcpS family. The cofactor is Mg(2+).

The protein resides in the cytoplasm. The enzyme catalyses apo-[ACP] + CoA = holo-[ACP] + adenosine 3',5'-bisphosphate + H(+). Its function is as follows. Transfers the 4'-phosphopantetheine moiety from coenzyme A to a Ser of acyl-carrier-protein. In Campylobacter jejuni subsp. jejuni serotype O:23/36 (strain 81-176), this protein is Holo-[acyl-carrier-protein] synthase.